The sequence spans 677 residues: Methionine--tRNA ligase (677 aa).

The short motif at 15 to 25 is the 'HIGH' region element; that stretch reads PYANGSIHLGH. 4 residues coordinate Zn(2+): cysteine 146, cysteine 149, cysteine 159, and cysteine 162. A 'KMSKS' region motif is present at residues 333–337; that stretch reads KMSKS. Lysine 336 serves as a coordination point for ATP. Positions 575 to 677 constitute a tRNA-binding domain; sequence DFAKVDLRVA…AGAKPGHQVK (103 aa).

Belongs to the class-I aminoacyl-tRNA synthetase family. MetG type 1 subfamily. Homodimer. Zn(2+) is required as a cofactor.

It is found in the cytoplasm. The enzyme catalyses tRNA(Met) + L-methionine + ATP = L-methionyl-tRNA(Met) + AMP + diphosphate. In terms of biological role, is required not only for elongation of protein synthesis but also for the initiation of all mRNA translation through initiator tRNA(fMet) aminoacylation. This chain is Methionine--tRNA ligase, found in Escherichia coli O81 (strain ED1a).